A 197-amino-acid chain; its full sequence is MCTGKCARCVGLSLITLCLVCIVANALLLVPNGETSWTNTNHLSLQVWLMGGFIGGGLMVLCPGIAAVRAGGKGCCGAGCCGNRCRMLRSVFSSAFGVLGAIYCLSVSGAGLRNGPRCLMNGEWGYHFEDTAGAYLLNRTLWDRCEAPPRVVPWNVTLFSLLVAASCLEIVLCGIQLVNATIGVFCGDCRKKQDTPH.

Residues 1–9 (MCTGKCARC) lie on the Cytoplasmic side of the membrane. Residues 10 to 30 (VGLSLITLCLVCIVANALLLV) form a helical membrane-spanning segment. At 31–46 (PNGETSWTNTNHLSLQ) the chain is on the extracellular side. A helical membrane pass occupies residues 47-67 (VWLMGGFIGGGLMVLCPGIAA). Residues 68–90 (VRAGGKGCCGAGCCGNRCRMLRS) lie on the Cytoplasmic side of the membrane. The helical transmembrane segment at 91-111 (VFSSAFGVLGAIYCLSVSGAG) threads the bilayer. Residues 91 to 197 (VFSSAFGVLG…DCRKKQDTPH (107 aa)) are interaction with MTOR and CASTOR1. Residues 112 to 157 (LRNGPRCLMNGEWGYHFEDTAGAYLLNRTLWDRCEAPPRVVPWNVT) lie on the Extracellular side of the membrane. Residue 124 to 129 (WGYHFE) participates in L-arginine binding. Residues N138 and N155 are each glycosylated (N-linked (GlcNAc...) asparagine). A helical transmembrane segment spans residues 158 to 178 (LFSLLVAASCLEIVLCGIQLV). Residues 179-197 (NATIGVFCGDCRKKQDTPH) are Cytoplasmic-facing.

Belongs to the L6 tetraspanin family. In terms of assembly, interacts with MTOR; the interaction is positively regulated by arginine and is negatively regulated by leucine. Interacts with SLC38A9. Interacts with SLC7A1; the interaction is negatively regulated by arginine. Interacts with CASTOR1; the interaction is positively regulated by leucine and is negatively regulated by arginine. As to expression, intestine. Overexpressed in pancreatic cancers.

The protein localises to the lysosome membrane. The protein resides in the cell membrane. Functionally, acts as a lysosomal membrane arginine sensor. Forms a complex with MTOR and SLC38A9 on lysosomal membranes in an arginine-regulated manner, leading to arginine efflux which enables the activation of mTORC1 which subsequently leads to RPS6KB1 and EIF4EBP1 phosphorylations. Facilitates cell cycle G1/S phase progression and the translocation of the CDK4-CCND1 complex into the nucleus. CDKN1B and RHOA/ROCK signaling activity are involved in TM4SF5-mediated acceleration of G1/S phase progression. The chain is Transmembrane 4 L6 family member 5 (TM4SF5) from Homo sapiens (Human).